Consider the following 1280-residue polypeptide: Pullulanase A (1280 aa).

The first 44 residues, 1-44, serve as a signal peptide directing secretion; that stretch reads MRKTPSHTEKKMVYSIRSLKNGTGSVLIGASLVLLAMATPTISS. Residues 42–132 are disordered; the sequence is ISSDESTPTT…VTTETKAEEP (91 aa). A compositionally biased stretch (low complexity) spans 48–61; it reads TPTTNEPNNRNTTT. Polar residues predominate over residues 79-90; that stretch reads DISSPGNANASL. Over residues 115 to 126 the composition is skewed to low complexity; it reads EPTTSTSPVTTE. Residues 156 to 158, Trp168, Asp214, 263 to 265, Trp276, Lys318, and Asn323 contribute to the substrate site; these read WTW and WYW. Ser661 and Tyr663 together coordinate Ca(2+). Substrate contacts are provided by residues 667-668 and Phe743; that span reads YD. Asp778 functions as the Nucleophile in the catalytic mechanism. Catalysis depends on Glu807, which acts as the Proton donor. Residue Trp809 coordinates substrate. 3 residues coordinate Ca(2+): Met828, Thr831, and Asp832. Residues Asp839, Arg842, and Tyr849 each contribute to the substrate site. Residues Asp882 and Asp886 each contribute to the Ca(2+) site. Substrate contacts are provided by residues Asn896, Lys969, and 989–991; that span reads DSY. Residue Asp992 participates in Ca(2+) binding. A disordered region spans residues 1140 to 1248; it reads VSQNGTSHES…TPDKQAELPN (109 aa). A compositionally biased stretch (basic and acidic residues) spans 1149-1196; sequence STAEEKPDSTPSKPEHQNEASHPAHQDPAPEARPDSTKPDAKVADAEN. Residues 1205-1218 show a composition bias toward low complexity; sequence SQAEQPAQEAQASS. The LPXTG sorting signal signature appears at 1246–1250; sequence LPNTG. Position 1249 is a pentaglycyl murein peptidoglycan amidated threonine (Thr1249). A propeptide spans 1250–1280 (removed by sortase); the sequence is GIKNENKLLFAGISLLALLGLGFLLKNKKEN.

Belongs to the glycosyl hydrolase 13 family.

It is found in the secreted. The protein resides in the cell wall. It localises to the cell surface. It catalyses the reaction Hydrolysis of (1-&gt;6)-alpha-D-glucosidic linkages in pullulan, amylopectin and glycogen, and in the alpha- and beta-limit dextrins of amylopectin and glycogen.. Inhibited by 4-O-alpha-D-glucopyranosylmoranoline (G1M). Its function is as follows. Virulence factor. Involved in the degradation of glycogen of the mammalian host cells. Hydrolyzes the alpha-1,6-branchpoints of glycogen. Hydrolyzes pullulan. Does not hydrolyze dextran. Binds to mouse lung alveolar type II cells that are rich in glycogen stores. Is an alpha-glucan-specific carbohydrate-binding protein, which binds to amylose (pure alpha-(1,4)-linked glucose), amylopectin (alpha-(1,4)-linked glucose with alpha-(1,6) branch points), pullulan (linear polymer of mixed alpha-(1,4)- and alpha-(1,6)-linked glucose) and glycogen (similar to amylopectin with more frequent alpha-(1,6) branch points) in vitro. Does not bind to dextran (a linear polymer of alpha-(1,6)-linked glucose). This Streptococcus pneumoniae serotype 4 (strain ATCC BAA-334 / TIGR4) protein is Pullulanase A.